The chain runs to 190 residues: CASP-like protein 1U3 (190 aa).

Residues 1-24 (MNGATVQPSYKEAGPVRYHPMHDC) lie on the Cytoplasmic side of the membrane. The helical transmembrane segment at 25–45 (LSLILRLLTLGATIAAIVAML) threads the bilayer. The Extracellular segment spans residues 46–70 (KSTQTVPTLLGPHTARWKDFPAFEW). Residues 71–91 (FVIGNSIVLVYAALGTLAACL) traverse the membrane as a helical segment. The Cytoplasmic portion of the chain corresponds to 92-113 (SLFTRRGPLSYTKTAWLTFLCD). The chain crosses the membrane as a helical span at residues 114 to 134 (FICSCALISAGSTALGVAWIG). Over 135–158 (KHGQHSAFWNAVCPTVDRFCDYVQ) the chain is Extracellular. Residues 159–179 (GALIATLCGFIFQALSTVIAA) form a helical membrane-spanning segment. Residues 180-190 (SALHNLATHRH) are Cytoplasmic-facing.

It belongs to the Casparian strip membrane proteins (CASP) family. In terms of assembly, homodimer and heterodimers.

It is found in the cell membrane. The sequence is that of CASP-like protein 1U3 from Physcomitrium patens (Spreading-leaved earth moss).